Reading from the N-terminus, the 133-residue chain is Large ribosomal subunit protein eL32 (133 aa).

This sequence belongs to the eukaryotic ribosomal protein eL32 family.

The polypeptide is Large ribosomal subunit protein eL32 (rpl32) (Dictyostelium discoideum (Social amoeba)).